Here is a 259-residue protein sequence, read N- to C-terminus: uncharacterized protein (259 aa).

This is an uncharacterized protein from Aquifex aeolicus (strain VF5).